We begin with the raw amino-acid sequence, 120 residues long: Large ribosomal subunit protein uL18 (120 aa).

This sequence belongs to the universal ribosomal protein uL18 family. In terms of assembly, part of the 50S ribosomal subunit; part of the 5S rRNA/L5/L18/L25 subcomplex. Contacts the 5S and 23S rRNAs.

Functionally, this is one of the proteins that bind and probably mediate the attachment of the 5S RNA into the large ribosomal subunit, where it forms part of the central protuberance. In Allorhizobium ampelinum (strain ATCC BAA-846 / DSM 112012 / S4) (Agrobacterium vitis (strain S4)), this protein is Large ribosomal subunit protein uL18.